Consider the following 464-residue polypeptide: Argininosuccinate lyase (464 aa).

Belongs to the lyase 1 family. Argininosuccinate lyase subfamily.

The protein resides in the cytoplasm. It catalyses the reaction 2-(N(omega)-L-arginino)succinate = fumarate + L-arginine. It functions in the pathway amino-acid biosynthesis; L-arginine biosynthesis; L-arginine from L-ornithine and carbamoyl phosphate: step 3/3. This is Argininosuccinate lyase from Pseudomonas aeruginosa (strain UCBPP-PA14).